The primary structure comprises 306 residues: Acetyl-coenzyme A carboxylase carboxyl transferase subunit beta (306 aa).

The CoA carboxyltransferase N-terminal domain occupies 27-296 (LWHKCPSCEA…PEFVAAPVEP (270 aa)). Cys-31, Cys-34, Cys-50, and Cys-53 together coordinate Zn(2+). Residues 31–53 (CPSCEAVLYRPELEKTLDVCPKC) form a C4-type zinc finger.

Belongs to the AccD/PCCB family. As to quaternary structure, acetyl-CoA carboxylase is a heterohexamer composed of biotin carboxyl carrier protein (AccB), biotin carboxylase (AccC) and two subunits each of ACCase subunit alpha (AccA) and ACCase subunit beta (AccD). The cofactor is Zn(2+).

It localises to the cytoplasm. It carries out the reaction N(6)-carboxybiotinyl-L-lysyl-[protein] + acetyl-CoA = N(6)-biotinyl-L-lysyl-[protein] + malonyl-CoA. It participates in lipid metabolism; malonyl-CoA biosynthesis; malonyl-CoA from acetyl-CoA: step 1/1. In terms of biological role, component of the acetyl coenzyme A carboxylase (ACC) complex. Biotin carboxylase (BC) catalyzes the carboxylation of biotin on its carrier protein (BCCP) and then the CO(2) group is transferred by the transcarboxylase to acetyl-CoA to form malonyl-CoA. In Pseudomonas fluorescens (strain ATCC BAA-477 / NRRL B-23932 / Pf-5), this protein is Acetyl-coenzyme A carboxylase carboxyl transferase subunit beta.